The sequence spans 314 residues: Olfactory receptor 9A4 (314 aa).

Residues 1 to 24 lie on the Extracellular side of the membrane; that stretch reads MLMNYSSATEFYLLGFPGSEELHH. The N-linked (GlcNAc...) asparagine glycan is linked to Asn-4. The chain crosses the membrane as a helical span at residues 25-45; sequence ILFAIFFFFYLVTLMGNTVII. The Cytoplasmic portion of the chain corresponds to 46-53; that stretch reads MIVCVDKR. The chain crosses the membrane as a helical span at residues 54–74; that stretch reads LQSPMYFFLGHLSALEILVTT. The Extracellular portion of the chain corresponds to 75–99; the sequence is IIVPVMLWGLLLPGMQTIYLSACVV. A disulfide bridge links Cys-97 with Cys-189. Residues 100–120 traverse the membrane as a helical segment; sequence QLFLYLAVGTTEFALLGAMAV. The Cytoplasmic portion of the chain corresponds to 121-139; the sequence is DRYVAVCNPLRYNIIMNRH. Residues 140–160 form a helical membrane-spanning segment; the sequence is TCNFVVLVSWVFGFLFQIWPV. At 161–197 the chain is on the extracellular side; the sequence is YVMFQLTYCKSNVVNNFFCDRGQLLKLSCNNTLFTEF. N-linked (GlcNAc...) asparagine glycosylation is present at Asn-190. A helical membrane pass occupies residues 198–217; it reads ILFLMAVFVLFGSLIPTIVS. Residues 218–237 are Cytoplasmic-facing; sequence NAYIISTILKIPSSSGRRKS. A helical transmembrane segment spans residues 238–258; that stretch reads FSTCASHFTCVVIGYGSCLFL. Topologically, residues 259 to 271 are extracellular; sequence YVKPKQTQAADYN. The helical transmembrane segment at 272-292 threads the bilayer; the sequence is WVVSLMVSVVTPFLNPFIFTL. Topologically, residues 293-314 are cytoplasmic; the sequence is RNDKVIEALRDGVKRCCQLFRN.

It belongs to the G-protein coupled receptor 1 family.

The protein resides in the cell membrane. Odorant receptor. In Homo sapiens (Human), this protein is Olfactory receptor 9A4 (OR9A4).